Reading from the N-terminus, the 149-residue chain is Dehydrin Rab15 (149 aa).

A disordered region spans residues 1-149 (MEFQGQHDNP…KIKEKLPGQH (149 aa)). The segment covering 78 to 93 (KEKIKEKLPGGHKDNQ) has biased composition (basic and acidic residues). A compositionally biased stretch (gly residues) spans 100 to 117 (TGTGGAYGPGTGTGGAYG). Over residues 132–149 (GEKKGIMDKIKEKLPGQH) the composition is skewed to basic and acidic residues.

Belongs to the plant dehydrin family.

The sequence is that of Dehydrin Rab15 (RAB15) from Triticum aestivum (Wheat).